Here is a 689-residue protein sequence, read N- to C-terminus: Glycine--tRNA ligase beta subunit (689 aa).

Belongs to the class-II aminoacyl-tRNA synthetase family. Tetramer of two alpha and two beta subunits.

The protein localises to the cytoplasm. The catalysed reaction is tRNA(Gly) + glycine + ATP = glycyl-tRNA(Gly) + AMP + diphosphate. The polypeptide is Glycine--tRNA ligase beta subunit (Shewanella baltica (strain OS195)).